The primary structure comprises 236 residues: uncharacterized protein (236 aa).

Residues aspartate 22, asparagine 49, and lysine 82 each coordinate NADP(+). Catalysis depends on proton donor residues serine 100 and tyrosine 114. Residues tyrosine 114 and lysine 118 each contribute to the NADP(+) site. The Lowers pKa of active site Tyr role is filled by lysine 118.

It belongs to the short-chain dehydrogenases/reductases (SDR) family.

The protein localises to the cytoplasm. It is found in the nucleus. This is an uncharacterized protein from Schizosaccharomyces pombe (strain 972 / ATCC 24843) (Fission yeast).